The primary structure comprises 144 residues: UPF0102 protein BPSL3274 (144 aa).

Residues 1–28 form a disordered region; the sequence is MCHAREASPGTGEPEAAPRDNFPREAGS. The segment covering 16–28 has biased composition (basic and acidic residues); sequence AAPRDNFPREAGS.

It belongs to the UPF0102 family.

The sequence is that of UPF0102 protein BPSL3274 from Burkholderia pseudomallei (strain K96243).